We begin with the raw amino-acid sequence, 960 residues long: Protein mono-ADP-ribosyltransferase PARP10 (960 aa).

Residue Glu103 is modified to ADP-ribosyl glutamic acid. The segment covering 325–341 has biased composition (polar residues); the sequence is SMGSTSPVDPVESSTEL. The disordered stretch occupies residues 325–346; that stretch reads SMGSTSPVDPVESSTELPEQVG. Phosphoserine is present on residues Ser381 and Ser388. The disordered stretch occupies residues 553 to 576; the sequence is SPHGGEDRVPLEMEKEKPGGPGET. Residues 555–570 are compositionally biased toward basic and acidic residues; it reads HGGEDRVPLEMEKEKP. Residues 604-621 carry the Ubiquitin-interacting motif; sequence LEEEATLQLAIHRSLESQ. Ser617 carries the post-translational modification Phosphoserine. The myc binding stretch occupies residues 649 to 856; it reads DEDTGGEAQL…CAHGFNRSFC (208 aa). Residues 755–960 form the PARP catalytic domain; the sequence is PNLSEQGLKE…TCKNILPGTP (206 aa). The PIP-box motif lies at 780–787; that stretch reads QDVVRAFY. Glu831 carries the ADP-ribosyl glutamic acid modification.

It belongs to the ARTD/PARP family. In terms of assembly, interacts with MYC. Interacts with PARP14. Interacts (via-PIP box and ubiquitin-interacting motifs) with PCNA. Post-translationally, stimulated through its phosphorylation by CDK2. Acquires CDK-dependent phosphorylation through late-G1 to S phase, and from prometaphase to cytokinesis in the nucleolar organizing regions. Phosphorylation is suppressed in growth-arrested cells. In terms of processing, auto-mono-ADP-ribosylated on glutamate and lysine residues.

Its subcellular location is the cytoplasm. It is found in the nucleus. The enzyme catalyses L-lysyl-[protein] + NAD(+) = N(6)-(ADP-D-ribosyl)-L-lysyl-[protein] + nicotinamide + H(+). The catalysed reaction is L-aspartyl-[protein] + NAD(+) = 4-O-(ADP-D-ribosyl)-L-aspartyl-[protein] + nicotinamide. It catalyses the reaction L-glutamyl-[protein] + NAD(+) = 5-O-(ADP-D-ribosyl)-L-glutamyl-[protein] + nicotinamide. In terms of biological role, ADP-ribosyltransferase that mediates mono-ADP-ribosylation of glutamate and aspartate residues on target proteins. In contrast to PARP1 and PARP2, it is not able to mediate poly-ADP-ribosylation. Catalyzes mono-ADP-ribosylation of GSK3B, leading to negatively regulate GSK3B kinase activity. Involved in translesion DNA synthesis in response to DNA damage via its interaction with PCNA. In Mus musculus (Mouse), this protein is Protein mono-ADP-ribosyltransferase PARP10.